Here is a 165-residue protein sequence, read N- to C-terminus: Interferon gamma (165 aa).

Residues 1–23 (MKYTSYILAFQLCIVLGSLGCYC) form the signal peptide. At Q24 the chain carries Pyrrolidone carboxylic acid. 2 N-linked (GlcNAc...) asparagine glycosylation sites follow: N48 and N120.

It belongs to the type II (or gamma) interferon family. As to quaternary structure, homodimer. Interacts with IFNGR1 (via extracellular domain); this interaction promotes IFNGR1 dimerization. In terms of tissue distribution, released primarily from activated T lymphocytes.

The protein localises to the secreted. Type II interferon produced by immune cells such as T-cells and NK cells that plays crucial roles in antimicrobial, antiviral, and antitumor responses by activating effector immune cells and enhancing antigen presentation. Primarily signals through the JAK-STAT pathway after interaction with its receptor IFNGR1 to affect gene regulation. Upon IFNG binding, IFNGR1 intracellular domain opens out to allow association of downstream signaling components JAK2, JAK1 and STAT1, leading to STAT1 activation, nuclear translocation and transcription of IFNG-regulated genes. Many of the induced genes are transcription factors such as IRF1 that are able to further drive regulation of a next wave of transcription. Plays a role in class I antigen presentation pathway by inducing a replacement of catalytic proteasome subunits with immunoproteasome subunits. In turn, increases the quantity, quality, and repertoire of peptides for class I MHC loading. Increases the efficiency of peptide generation also by inducing the expression of activator PA28 that associates with the proteasome and alters its proteolytic cleavage preference. Up-regulates as well MHC II complexes on the cell surface by promoting expression of several key molecules such as cathepsins B/CTSB, H/CTSH, and L/CTSL. Participates in the regulation of hematopoietic stem cells during development and under homeostatic conditions by affecting their development, quiescence, and differentiation. In Macaca fascicularis (Crab-eating macaque), this protein is Interferon gamma (IFNG).